The following is a 634-amino-acid chain: CRISPR-associated protein MJ1674 (634 aa).

Functionally, CRISPR (clustered regularly interspaced short palindromic repeat) is an adaptive immune system that provides protection against mobile genetic elements (viruses, transposable elements and conjugative plasmids). CRISPR clusters contain spacers, sequences complementary to antecedent mobile elements, and target invading nucleic acids. CRISPR clusters are transcribed and processed into CRISPR RNA (crRNA). The type III Csm effector complex binds crRNA and acts as a crRNA-guided RNase, DNase and cyclic oligoadenylate synthase; binding of target RNA cognate to the crRNA is required for all activities. The sequence is that of CRISPR-associated protein MJ1674 from Methanocaldococcus jannaschii (strain ATCC 43067 / DSM 2661 / JAL-1 / JCM 10045 / NBRC 100440) (Methanococcus jannaschii).